Consider the following 314-residue polypeptide: 3'-5' exoribonuclease YhaM (314 aa).

The HD domain occupies 163–279 (HVVSMLDLAK…LHYIDNLDAK (117 aa)).

This sequence belongs to the YhaM family.

Its function is as follows. Shows a 3'-5' exoribonuclease activity. The chain is 3'-5' exoribonuclease YhaM from Bacillus cereus (strain G9842).